Reading from the N-terminus, the 92-residue chain is MKLCVTVLSLLVLMAAFCSPALSAPMGSDPPTACCFSYTLRKIPRNFVNDYFETSSLCSQPAVVFQTKKGRQVCANPSEPWVQEYVDDLELN.

Positions 1–23 (MKLCVTVLSLLVLMAAFCSPALS) are cleaved as a signal peptide. Intrachain disulfides connect Cys-34–Cys-58 and Cys-35–Cys-74.

The protein belongs to the intercrine beta (chemokine CC) family. In terms of assembly, homodimer. Interacts with CCR5.

It localises to the secreted. Functionally, monokine with inflammatory and chemokinetic properties. In Bos taurus (Bovine), this protein is C-C motif chemokine 4 (CCL4).